The sequence spans 395 residues: Dihydroorotate dehydrogenase (quinone), mitochondrial (395 aa).

A mitochondrion; not cleaved-targeting transit peptide spans 1–10 (MAWRQLRKRA). The Mitochondrial matrix segment spans residues 1–10 (MAWRQLRKRA). Residues 11–30 (LDAAIILGGGGLLFTSYLTA) form a helical membrane-spanning segment. The Mitochondrial intermembrane segment spans residues 31–395 (TGDDHFYAEY…TDAIGVDHRR (365 aa)). Residues 95–99 (AGFDK) and Ser-119 contribute to the FMN site. Lys-99 contributes to the substrate binding site. 144-148 (NRYGF) is a binding site for substrate. FMN-binding residues include Asn-180 and Asn-211. 211–216 (NVSSPN) is a binding site for substrate. Ser-214 serves as the catalytic Nucleophile. 2 residues coordinate FMN: Lys-254 and Thr-282. 283-284 (NT) contributes to the substrate binding site. FMN contacts are provided by residues Gly-305, Gly-334, and 355-356 (YT).

It belongs to the dihydroorotate dehydrogenase family. Type 2 subfamily. In terms of assembly, monomer. FMN serves as cofactor. In terms of processing, the uncleaved transit peptide is required for mitochondrial targeting and proper membrane integration.

The protein localises to the mitochondrion inner membrane. The enzyme catalyses (S)-dihydroorotate + a quinone = orotate + a quinol. Its pathway is pyrimidine metabolism; UMP biosynthesis via de novo pathway; orotate from (S)-dihydroorotate (quinone route): step 1/1. Catalyzes the conversion of dihydroorotate to orotate with quinone as electron acceptor. Required for UMP biosynthesis via de novo pathway. The protein is Dihydroorotate dehydrogenase (quinone), mitochondrial (Dhodh) of Mus musculus (Mouse).